The sequence spans 138 residues: MAALPDKEKLLRNFTRCANWEEKYLYIIDLGQRLAELNTQDRNPQNRIQGCQSQVWIVIGRNADGIIELQGDSDAAIVKGLMAVVFILYHHMTAQDIVHFDVRPWFEKMALTQHLTPSRSQGLEAMIRAIRAKAATLS.

Catalysis depends on Cys51, which acts as the Cysteine persulfide intermediate.

The protein belongs to the SufE family. Homodimer. Interacts with SufS.

Its subcellular location is the cytoplasm. The protein operates within cofactor biosynthesis; iron-sulfur cluster biosynthesis. In terms of biological role, participates in cysteine desulfuration mediated by SufS. Cysteine desulfuration mobilizes sulfur from L-cysteine to yield L-alanine and constitutes an essential step in sulfur metabolism for biosynthesis of a variety of sulfur-containing biomolecules. Functions as a sulfur acceptor for SufS, by mediating the direct transfer of the sulfur atom from the S-sulfanylcysteine of SufS, an intermediate product of cysteine desulfuration process. This Salmonella arizonae (strain ATCC BAA-731 / CDC346-86 / RSK2980) protein is Cysteine desulfuration protein SufE.